The primary structure comprises 364 residues: Nucleoporin SEH1 (364 aa).

WD repeat units follow at residues 10–49 (DHKD…EWHC), 55–96 (THSG…SNDK), 111–152 (DSRT…NLSQ), 160–210 (SCKL…RKYA), 217–258 (TVTD…RESA), and 276–315 (SHNS…NWKC).

Belongs to the WD repeat SEC13 family. As to quaternary structure, component of the Nup107-160 subcomplex of the nuclear pore complex (NPC). The Nup107-160 subcomplex includes NUP160, NUP133, NUP107, NUP98, NUP85, NUP43, NUP37, SEH1 and SEC13. Component of the GATOR2 subcomplex, composed of MIOS, SEC13, SEH1L, WDR24 and WDR59. The GATOR2 complex interacts with CASTOR1 and CASTOR2; the interaction is negatively regulated by arginine. The GATOR2 complex interacts with SESN1, SESN2 and SESN3; the interaction is negatively regulated by amino acids.

It localises to the chromosome. Its subcellular location is the centromere. It is found in the kinetochore. The protein localises to the nucleus. The protein resides in the nuclear pore complex. It localises to the lysosome membrane. Its activity is regulated as follows. The GATOR2 complex is negatively regulated by the upstream amino acid sensors CASTOR1 and SESN2, which sequester the GATOR2 complex in absence of amino acids. In the presence of abundant amino acids, GATOR2 is released from CASTOR1 and SESN2 and activated. In terms of biological role, component of the Nup107-160 subcomplex of the nuclear pore complex (NPC). The Nup107-160 subcomplex is required for the assembly of a functional NPC. The Nup107-160 subcomplex is also required for normal kinetochore microtubule attachment, mitotic progression and chromosome segregation. This subunit plays a role in recruitment of the Nup107-160 subcomplex to the kinetochore. As a component of the GATOR2 complex, functions as an activator of the amino acid-sensing branch of the mTORC1 signaling pathway. The GATOR2 complex indirectly activates mTORC1 through the inhibition of the GATOR1 subcomplex. GATOR2 probably acts as an E3 ubiquitin-protein ligase toward GATOR1. In the presence of abundant amino acids, the GATOR2 complex mediates ubiquitination of the NPRL2 core component of the GATOR1 complex, leading to GATOR1 inactivation. In the absence of amino acids, GATOR2 is inhibited, activating the GATOR1 complex. The chain is Nucleoporin SEH1 (seh1l) from Danio rerio (Zebrafish).